The following is a 519-amino-acid chain: Glycogen synthase (519 aa).

Positions M1–P40 are disordered. Residues P8 to L21 are compositionally biased toward basic and acidic residues. K57 contributes to the ADP-alpha-D-glucose binding site.

This sequence belongs to the glycosyltransferase 1 family. Bacterial/plant glycogen synthase subfamily.

It catalyses the reaction [(1-&gt;4)-alpha-D-glucosyl](n) + ADP-alpha-D-glucose = [(1-&gt;4)-alpha-D-glucosyl](n+1) + ADP + H(+). It participates in glycan biosynthesis; glycogen biosynthesis. Its function is as follows. Synthesizes alpha-1,4-glucan chains using ADP-glucose. This is Glycogen synthase from Pseudomonas putida (strain ATCC 47054 / DSM 6125 / CFBP 8728 / NCIMB 11950 / KT2440).